The chain runs to 380 residues: Alanine racemase (380 aa).

The active-site Proton acceptor; specific for D-alanine is K41. Residue K41 is modified to N6-(pyridoxal phosphate)lysine. Position 141 (R141) interacts with substrate. Residue Y271 is the Proton acceptor; specific for L-alanine of the active site. Residue M318 participates in substrate binding.

It belongs to the alanine racemase family. The cofactor is pyridoxal 5'-phosphate.

It catalyses the reaction L-alanine = D-alanine. It participates in amino-acid biosynthesis; D-alanine biosynthesis; D-alanine from L-alanine: step 1/1. Functionally, catalyzes the interconversion of L-alanine and D-alanine. May also act on other amino acids. This chain is Alanine racemase (alr), found in Latilactobacillus sakei subsp. sakei (strain 23K) (Lactobacillus sakei subsp. sakei).